The sequence spans 147 residues: Myoglobin (147 aa).

The Globin domain occupies 2 to 141 (ADFDAVLKCW…VIADLEANYK (140 aa)). Residue His-60 participates in nitrite binding. His-60 serves as a coordination point for O2. Residue His-89 participates in heme b binding.

It belongs to the globin family. In terms of assembly, monomeric.

It localises to the cytoplasm. The protein resides in the sarcoplasm. The catalysed reaction is Fe(III)-heme b-[protein] + nitric oxide + H2O = Fe(II)-heme b-[protein] + nitrite + 2 H(+). It catalyses the reaction H2O2 + AH2 = A + 2 H2O. Functionally, monomeric heme protein which primary function is to store oxygen and facilitate its diffusion within muscle tissues. Reversibly binds oxygen through a pentacoordinated heme iron and enables its timely and efficient release as needed during periods of heightened demand. Depending on the oxidative conditions of tissues and cells, and in addition to its ability to bind oxygen, it also has a nitrite reductase activity whereby it regulates the production of bioactive nitric oxide. Under stress conditions, like hypoxia and anoxia, it also protects cells against reactive oxygen species thanks to its pseudoperoxidase activity. In Auxis rochei (Bullet tuna), this protein is Myoglobin (mb).